The sequence spans 734 residues: Photosystem I P700 chlorophyll a apoprotein A2 (734 aa).

8 helical membrane-spanning segments follow: residues 46–69, 135–158, 175–199, 273–291, 330–353, 369–395, 417–439, and 517–535; these read IFAS…FHVA, LYSG…LHLQ, LNHH…HVAI, MAHH…GHMY, IHFQ…QHMY, AALY…IFFI, AIIS…LYVH, and FLVH…LILV. [4Fe-4S] cluster contacts are provided by cysteine 559 and cysteine 568. 2 consecutive transmembrane segments (helical) span residues 575 to 596 and 643 to 665; these read AFYL…YWHW and LSVW…MFLI. Positions 654, 662, and 670 each coordinate chlorophyll a. Tryptophan 671 serves as a coordination point for phylloquinone. The helical transmembrane segment at 707–727 threads the bilayer; sequence LVGLAHFSVGYIFTYAAFLIA.

Belongs to the PsaA/PsaB family. The PsaA/B heterodimer binds the P700 chlorophyll special pair and subsequent electron acceptors. PSI consists of a core antenna complex that captures photons, and an electron transfer chain that converts photonic excitation into a charge separation. The eukaryotic PSI reaction center is composed of at least 11 subunits. The cofactor is P700 is a chlorophyll a/chlorophyll a' dimer, A0 is one or more chlorophyll a, A1 is one or both phylloquinones and FX is a shared 4Fe-4S iron-sulfur center..

Its subcellular location is the plastid. The protein resides in the chloroplast thylakoid membrane. The catalysed reaction is reduced [plastocyanin] + hnu + oxidized [2Fe-2S]-[ferredoxin] = oxidized [plastocyanin] + reduced [2Fe-2S]-[ferredoxin]. Functionally, psaA and PsaB bind P700, the primary electron donor of photosystem I (PSI), as well as the electron acceptors A0, A1 and FX. PSI is a plastocyanin-ferredoxin oxidoreductase, converting photonic excitation into a charge separation, which transfers an electron from the donor P700 chlorophyll pair to the spectroscopically characterized acceptors A0, A1, FX, FA and FB in turn. Oxidized P700 is reduced on the lumenal side of the thylakoid membrane by plastocyanin. This Lotus japonicus (Lotus corniculatus var. japonicus) protein is Photosystem I P700 chlorophyll a apoprotein A2.